The primary structure comprises 511 residues: Limonoid UDP-glucosyltransferase (511 aa).

The active-site Proton acceptor is the His-19. His-19 contributes to the an anthocyanidin binding site. The UDP-alpha-D-glucose site is built by Gln-344, His-359, Trp-362, Asn-363, Ser-364, and Glu-367. Gly-382 provides a ligand contact to an anthocyanidin. Asp-383 and Gln-384 together coordinate UDP-alpha-D-glucose.

This sequence belongs to the UDP-glycosyltransferase family.

The enzyme catalyses limonin + UDP-alpha-D-glucose + H2O = limonin 17-beta-D-glucoside + UDP + 2 H(+). Involved in the glucosylation of limonoids. This Citrus unshiu (Satsuma mandarin) protein is Limonoid UDP-glucosyltransferase.